A 230-amino-acid polypeptide reads, in one-letter code: Probable nicotinate-nucleotide adenylyltransferase (230 aa).

Belongs to the NadD family.

It carries out the reaction nicotinate beta-D-ribonucleotide + ATP + H(+) = deamido-NAD(+) + diphosphate. It functions in the pathway cofactor biosynthesis; NAD(+) biosynthesis; deamido-NAD(+) from nicotinate D-ribonucleotide: step 1/1. In terms of biological role, catalyzes the reversible adenylation of nicotinate mononucleotide (NaMN) to nicotinic acid adenine dinucleotide (NaAD). The chain is Probable nicotinate-nucleotide adenylyltransferase from Pseudomonas putida (strain ATCC 47054 / DSM 6125 / CFBP 8728 / NCIMB 11950 / KT2440).